A 143-amino-acid chain; its full sequence is Transcription antitermination protein NusB (143 aa).

The protein belongs to the NusB family.

Involved in transcription antitermination. Required for transcription of ribosomal RNA (rRNA) genes. Binds specifically to the boxA antiterminator sequence of the ribosomal RNA (rrn) operons. In Desulforamulus reducens (strain ATCC BAA-1160 / DSM 100696 / MI-1) (Desulfotomaculum reducens), this protein is Transcription antitermination protein NusB.